The following is a 135-amino-acid chain: MPTNQQLIRKARQRLESGTKSPALRGCPQRRGVCTRVYTTTPKKPNSALRKVARVRLTSKFEVTAYIPGIGHNLQEHSVVLVRGGRVKDLPGVRYHIVRGALDAVGVKDRKKGRSSALQSIVATRIIATIPYQLF.

Belongs to the universal ribosomal protein uS12 family. As to quaternary structure, part of the 30S ribosomal subunit.

It is found in the plastid. The protein resides in the chloroplast. In terms of biological role, with S4 and S5 plays an important role in translational accuracy. Located at the interface of the 30S and 50S subunits. This Adiantum capillus-veneris (Maidenhair fern) protein is Small ribosomal subunit protein uS12c (rps12).